Reading from the N-terminus, the 602-residue chain is VIN3-like protein 1 (602 aa).

Positions 1-38 (MDSSSTKSKISHSRKTNKKSNKKHESNGKQQQQQDVDG) are disordered. The span at 9–22 (KISHSRKTNKKSNK) shows a compositional bias: basic residues. A PHD-type zinc finger spans residues 67–137 (RCSCCVCHNF…CFCCYSCGKV (71 aa)). The short motif at 144–151 (WKKQLVAA) is the Nuclear localization signal element. Positions 242–340 (VPAACRFHFE…AMCFTKSVEI (99 aa)) constitute a Fibronectin type-III domain. The tract at residues 430-470 (LNEEFTPPDSSGGEDNGVPLNSLAEADGGDHDDNCDDAVSN) is disordered. Residues 502 to 602 (AISDSNDSEN…RPNNGVMTSH (101 aa)) form a VIN3-Interacting Domain (VID) region.

In terms of assembly, interacts with VIN3 and VIL2. The heterodimer made of VIN3 and VIL1 is required for establishing the vernalization-induced epigenetic silencing of FLC. Component of the plant homeodomain / polycomb repressive complex 2 (PHD-PRC2) large complex during prolonged cold, composed of core PRC2 components (VRN2, EZA1, FIE and MSI1), and three related PHD finger proteins (VIL1, VIL2 and VIN3) that mediates histone H3 trimethylation on 'Lys-27' (H3K27me3). As to expression, accumulates in shoot and root apices, and in leaves.

It is found in the nucleus. Its subcellular location is the nucleus speckle. Its function is as follows. Involved in both the vernalization and photoperiod pathways by regulating expression of the related floral repressors FLOWERING LOCUS C (FLC) and FLOWERING LOCUS M (FLM). Together with VIN3, required during vernalization for the modifications of FLC and FLM chromatin that are associated with an epigenetically silenced state (e.g. chromatin modifications, histone deacetylation, and trimethylated H3 'Lys-4' H3K4me3 and 'Lys-27' H3K27me3) and with acquisition of competence to flower. Promotes flowering in short days (SD=8 hours light/16 hours dark). Associates dynamically at FLC locus; during vernalization, binds to specific sites, but when in warm conditions, distributed along the whole locus. In Arabidopsis thaliana (Mouse-ear cress), this protein is VIN3-like protein 1 (VIL1).